We begin with the raw amino-acid sequence, 360 residues long: Spermidine/putrescine-binding periplasmic protein 1 (360 aa).

Residues Met-1–Thr-16 form the signal peptide.

Belongs to the bacterial solute-binding protein PotD/PotF family.

It is found in the periplasm. Functionally, required for the activity of the bacterial periplasmic transport system of putrescine and spermidine. Polyamine binding protein. This chain is Spermidine/putrescine-binding periplasmic protein 1 (potD-B), found in Haemophilus influenzae (strain ATCC 51907 / DSM 11121 / KW20 / Rd).